Here is a 73-residue protein sequence, read N- to C-terminus: Long neurotoxin 1 (73 aa).

Intrachain disulfides connect Cys3–Cys21, Cys14–Cys42, Cys27–Cys31, Cys46–Cys57, and Cys58–Cys63.

The protein belongs to the three-finger toxin family. Long-chain subfamily. Type II alpha-neurotoxin sub-subfamily. In terms of tissue distribution, expressed by the venom gland.

It is found in the secreted. Functionally, binds with high affinity to muscular (alpha-1/CHRNA1) and neuronal (alpha-7/CHRNA7) nicotinic acetylcholine receptor (nAChR) and inhibits acetylcholine from binding to the receptor, thereby impairing neuromuscular and neuronal transmission. In Ophiophagus hannah (King cobra), this protein is Long neurotoxin 1.